The following is a 403-amino-acid chain: Tyrosine--tRNA ligase (403 aa).

The 'HIGH' region motif lies at 46-55 (PTAPDLHLGH). The 'KMSKS' region motif lies at 230 to 234 (KMSKS). Position 233 (Lys233) interacts with ATP. One can recognise an S4 RNA-binding domain in the interval 342-402 (LFITQILNQA…GKKAYAKVTV (61 aa)).

It belongs to the class-I aminoacyl-tRNA synthetase family. TyrS type 2 subfamily. As to quaternary structure, homodimer.

Its subcellular location is the cytoplasm. It carries out the reaction tRNA(Tyr) + L-tyrosine + ATP = L-tyrosyl-tRNA(Tyr) + AMP + diphosphate + H(+). Functionally, catalyzes the attachment of tyrosine to tRNA(Tyr) in a two-step reaction: tyrosine is first activated by ATP to form Tyr-AMP and then transferred to the acceptor end of tRNA(Tyr). This Psychrobacter arcticus (strain DSM 17307 / VKM B-2377 / 273-4) protein is Tyrosine--tRNA ligase.